A 109-amino-acid chain; its full sequence is Cyclic di-AMP receptor A (109 aa).

The 3',3'-c-di-AMP site is built by Thr21, Phe25, Thr28, Gly35, Phe36, Leu37, Asn41, Gly47, Glu92, and Gly94.

In terms of assembly, homotrimer.

Its subcellular location is the cytoplasm. Its function is as follows. Binds cyclic di-AMP (c-di-AMP) and is probably involved in c-di-AMP-mediated signaling pathways. In vitro, can also bind cyclic GMP-AMP (3'3'-cGAMP), with lower affinity, but not c-di-GMP or 2'3'-cGAMP. The chain is Cyclic di-AMP receptor A from Bacillus subtilis (strain 168).